The primary structure comprises 466 residues: UDP-N-acetylmuramoylalanine--D-glutamate ligase (466 aa).

Residue 115-121 (GTDGKTT) coordinates ATP.

It belongs to the MurCDEF family.

It localises to the cytoplasm. The catalysed reaction is UDP-N-acetyl-alpha-D-muramoyl-L-alanine + D-glutamate + ATP = UDP-N-acetyl-alpha-D-muramoyl-L-alanyl-D-glutamate + ADP + phosphate + H(+). Its pathway is cell wall biogenesis; peptidoglycan biosynthesis. Cell wall formation. Catalyzes the addition of glutamate to the nucleotide precursor UDP-N-acetylmuramoyl-L-alanine (UMA). The protein is UDP-N-acetylmuramoylalanine--D-glutamate ligase of Chlorobium phaeobacteroides (strain BS1).